The following is a 508-amino-acid chain: Photosystem II CP47 reaction center protein (508 aa).

Helical transmembrane passes span 21 to 36 (SVHI…WAGS), 101 to 115 (IVFS…IWHW), 140 to 156 (GIHL…FGAF), 203 to 218 (IAAG…FHLS), 237 to 252 (VLSS…AFVV), and 457 to 472 (TFAL…HGAR).

Belongs to the PsbB/PsbC family. PsbB subfamily. In terms of assembly, PSII is composed of 1 copy each of membrane proteins PsbA, PsbB, PsbC, PsbD, PsbE, PsbF, PsbH, PsbI, PsbJ, PsbK, PsbL, PsbM, PsbT, PsbX, PsbY, PsbZ, Psb30/Ycf12, at least 3 peripheral proteins of the oxygen-evolving complex and a large number of cofactors. It forms dimeric complexes. The cofactor is Binds multiple chlorophylls. PSII binds additional chlorophylls, carotenoids and specific lipids..

It localises to the plastid. The protein resides in the chloroplast thylakoid membrane. One of the components of the core complex of photosystem II (PSII). It binds chlorophyll and helps catalyze the primary light-induced photochemical processes of PSII. PSII is a light-driven water:plastoquinone oxidoreductase, using light energy to abstract electrons from H(2)O, generating O(2) and a proton gradient subsequently used for ATP formation. The chain is Photosystem II CP47 reaction center protein from Oryza nivara (Indian wild rice).